The primary structure comprises 427 residues: Trigger factor (427 aa).

In terms of domain architecture, PPIase FKBP-type spans Gly-163–Pro-248.

Belongs to the FKBP-type PPIase family. Tig subfamily.

The protein resides in the cytoplasm. It carries out the reaction [protein]-peptidylproline (omega=180) = [protein]-peptidylproline (omega=0). In terms of biological role, involved in protein export. Acts as a chaperone by maintaining the newly synthesized protein in an open conformation. Functions as a peptidyl-prolyl cis-trans isomerase. In Clostridium botulinum (strain Eklund 17B / Type B), this protein is Trigger factor.